A 910-amino-acid chain; its full sequence is MPRSAAQSEEQTLQGSLFGAPEPAEPAKGRSSQPANPELEDLTDASLSADAAARPRQRQQRGESNDPSADATAEACDGDDASSDEPAWAHHSQVDPAQLTPMLRHYVELKAEHPERVLLYRLGDFFECFFEDAVELSRVLELTLTGKEGGKAIGRVPMAGIPHHAAERYCAELIRRGYSVALCDQLETTPAKGALLKRGITRVLTPGTVLEEGMLSARRNNWLAAVVVEPATSKTPLRWGLASADVSTGDVRVMERTGSDGLHQQLAQLDASELLWAGDGDSGEAARPTWCPERLRLSPMARTPFSAPQAEQTLKTHYQLASLDGLGLPELPLALRAFGGLLQYVNDTQPLEEDARVPLDVPAIVHSGEALVLDAQTRRNLELTATQRDGQLQGSLLWAIDQTLTAMGGRCLRRWLEAPLMNLSAIQQRQAVVSLLVSGRPLRQALRRLLRPMGDLERLAGRAGAGHAGARDLVAIADGLERLPQLASRLQSSLEQWPNELTALQQPEPALAELAASIRQTLIDAPPLSLSEGGLIHDGVDPLLDGLRNQLDDQDAWLAEQERLERERSGNNNLRLQYHRTFGYFLAVSKAKASSVPEHWIRRQTLANEERFITPELKEREGRIFQLRARACQREYELYCSLREQVGAMAAPIRAAARGIACLDALSGLADTAATGGWCAPLLNDSRQLEIVAGRHPVVEQLLVETSFTPNDLNLGSGTDLIVLTGPNASGKSCYLRQIGLIQLLAQIGSWVPATSARVGLADRIFTRVGAVDDLAAGQSTFMVEMAETANILHHASARSLVLLDEIGRGTATFDGLSIAWAVSEHLAGDLKARTVFATHYHELNNLAGERANVANFQVMVEETGADLVFLHQVQCGGASRSYGIEAARLAGVPTPVVQRARQVLDQLAA.

The segment covering 1 to 15 (MPRSAAQSEEQTLQG) has biased composition (polar residues). Residues 1 to 94 (MPRSAAQSEE…EPAWAHHSQV (94 aa)) form a disordered region. Residues 44-54 (DASLSADAAAR) show a composition bias toward low complexity. 726–733 (GPNASGKS) is an ATP binding site.

This sequence belongs to the DNA mismatch repair MutS family.

This protein is involved in the repair of mismatches in DNA. It is possible that it carries out the mismatch recognition step. This protein has a weak ATPase activity. This chain is DNA mismatch repair protein MutS, found in Synechococcus sp. (strain WH7803).